The following is a 434-amino-acid chain: Serine hydroxymethyltransferase (434 aa).

Residues Leu-124 and 128-130 (GHL) each bind (6S)-5,6,7,8-tetrahydrofolate. Lys-233 carries the post-translational modification N6-(pyridoxal phosphate)lysine. Glu-249 serves as a coordination point for (6S)-5,6,7,8-tetrahydrofolate.

This sequence belongs to the SHMT family. Homodimer. Pyridoxal 5'-phosphate serves as cofactor.

Its subcellular location is the cytoplasm. The catalysed reaction is (6R)-5,10-methylene-5,6,7,8-tetrahydrofolate + glycine + H2O = (6S)-5,6,7,8-tetrahydrofolate + L-serine. It participates in one-carbon metabolism; tetrahydrofolate interconversion. Its pathway is amino-acid biosynthesis; glycine biosynthesis; glycine from L-serine: step 1/1. In terms of biological role, catalyzes the reversible interconversion of serine and glycine with tetrahydrofolate (THF) serving as the one-carbon carrier. This reaction serves as the major source of one-carbon groups required for the biosynthesis of purines, thymidylate, methionine, and other important biomolecules. Also exhibits THF-independent aldolase activity toward beta-hydroxyamino acids, producing glycine and aldehydes, via a retro-aldol mechanism. In Synechococcus sp. (strain JA-3-3Ab) (Cyanobacteria bacterium Yellowstone A-Prime), this protein is Serine hydroxymethyltransferase.